The chain runs to 293 residues: uncharacterized protein (293 aa).

The protein to M.jannaschii MJ1614 and MJ0008.

This is an uncharacterized protein from Methanocaldococcus jannaschii (strain ATCC 43067 / DSM 2661 / JAL-1 / JCM 10045 / NBRC 100440) (Methanococcus jannaschii).